Reading from the N-terminus, the 188-residue chain is F7-2 fimbrial protein (188 aa).

A signal peptide spans 1 to 21 (MIKSVIAGAVAMAVVSFGAYA). A disulfide bond links cysteine 43 and cysteine 82.

The protein belongs to the fimbrial protein family.

Its subcellular location is the fimbrium. Functionally, fimbriae (also called pili), polar filaments radiating from the surface of the bacterium to a length of 0.5-1.5 micrometers and numbering 100-300 per cell, enable bacteria to colonize the epithelium of specific host organs. In Escherichia coli O6:H1 (strain CFT073 / ATCC 700928 / UPEC), this protein is F7-2 fimbrial protein (F7-2).